The sequence spans 1407 residues: DNA-directed RNA polymerase subunit beta' (1407 aa).

Zn(2+)-binding residues include Cys70, Cys72, Cys85, and Cys88. Asp460, Asp462, and Asp464 together coordinate Mg(2+). Zn(2+) is bound by residues Cys814, Cys888, Cys895, and Cys898.

Belongs to the RNA polymerase beta' chain family. The RNAP catalytic core consists of 2 alpha, 1 beta, 1 beta' and 1 omega subunit. When a sigma factor is associated with the core the holoenzyme is formed, which can initiate transcription. It depends on Mg(2+) as a cofactor. Zn(2+) serves as cofactor.

It catalyses the reaction RNA(n) + a ribonucleoside 5'-triphosphate = RNA(n+1) + diphosphate. Its function is as follows. DNA-dependent RNA polymerase catalyzes the transcription of DNA into RNA using the four ribonucleoside triphosphates as substrates. The protein is DNA-directed RNA polymerase subunit beta' of Pectobacterium atrosepticum (strain SCRI 1043 / ATCC BAA-672) (Erwinia carotovora subsp. atroseptica).